Reading from the N-terminus, the 175-residue chain is Crossover junction endodeoxyribonuclease RuvC (175 aa).

Residues D11, E71, and H143 contribute to the active site. 3 residues coordinate Mg(2+): D11, E71, and H143.

This sequence belongs to the RuvC family. In terms of assembly, homodimer which binds Holliday junction (HJ) DNA. The HJ becomes 2-fold symmetrical on binding to RuvC with unstacked arms; it has a different conformation from HJ DNA in complex with RuvA. In the full resolvosome a probable DNA-RuvA(4)-RuvB(12)-RuvC(2) complex forms which resolves the HJ. The cofactor is Mg(2+).

Its subcellular location is the cytoplasm. It catalyses the reaction Endonucleolytic cleavage at a junction such as a reciprocal single-stranded crossover between two homologous DNA duplexes (Holliday junction).. In terms of biological role, the RuvA-RuvB-RuvC complex processes Holliday junction (HJ) DNA during genetic recombination and DNA repair. Endonuclease that resolves HJ intermediates. Cleaves cruciform DNA by making single-stranded nicks across the HJ at symmetrical positions within the homologous arms, yielding a 5'-phosphate and a 3'-hydroxyl group; requires a central core of homology in the junction. The consensus cleavage sequence is 5'-(A/T)TT(C/G)-3'. Cleavage occurs on the 3'-side of the TT dinucleotide at the point of strand exchange. HJ branch migration catalyzed by RuvA-RuvB allows RuvC to scan DNA until it finds its consensus sequence, where it cleaves and resolves the cruciform DNA. This is Crossover junction endodeoxyribonuclease RuvC from Parvibaculum lavamentivorans (strain DS-1 / DSM 13023 / NCIMB 13966).